The sequence spans 306 residues: Homoserine O-acetyltransferase (306 aa).

Residue Cys-142 is the Acyl-thioester intermediate of the active site. Residues Lys-163 and Ser-192 each contribute to the substrate site. Residue His-235 is the Proton acceptor of the active site. Glu-237 is an active-site residue. A substrate-binding site is contributed by Arg-249.

The protein belongs to the MetA family.

It localises to the cytoplasm. It carries out the reaction L-homoserine + acetyl-CoA = O-acetyl-L-homoserine + CoA. It functions in the pathway amino-acid biosynthesis; L-methionine biosynthesis via de novo pathway; O-acetyl-L-homoserine from L-homoserine: step 1/1. Its function is as follows. Transfers an acetyl group from acetyl-CoA to L-homoserine, forming acetyl-L-homoserine. The protein is Homoserine O-acetyltransferase of Clostridium botulinum (strain Alaska E43 / Type E3).